A 109-amino-acid polypeptide reads, in one-letter code: Probable guanidinium efflux system subunit GdnC (109 aa).

The next 4 helical transmembrane spans lie at tryptophan 3 to alanine 23, alanine 26 to alanine 46, valine 55 to phenylalanine 75, and isoleucine 81 to threonine 101.

The protein belongs to the drug/metabolite transporter (DMT) superfamily. Small multidrug resistance (SMR) (TC 2.A.7.1) family. YkkC/YkkD subfamily. As to quaternary structure, the efflux pump is composed of GdnC and GdnD.

It localises to the cell membrane. Functionally, probably involved in guanidinium transport. The sequence is that of Probable guanidinium efflux system subunit GdnC from Bacillus licheniformis (strain ATCC 14580 / DSM 13 / JCM 2505 / CCUG 7422 / NBRC 12200 / NCIMB 9375 / NCTC 10341 / NRRL NRS-1264 / Gibson 46).